Reading from the N-terminus, the 145-residue chain is uncharacterized protein (145 aa).

Residues 86-110 form a dksA C4-type zinc finger; that stretch reads CERCGEEIPEPRLCAIPWTRYCAKC.

This is an uncharacterized protein from Aquifex aeolicus (strain VF5).